The following is a 299-amino-acid chain: Coenzyme PQQ synthesis protein B (299 aa).

This sequence belongs to the PqqB family.

The protein operates within cofactor biosynthesis; pyrroloquinoline quinone biosynthesis. May be involved in the transport of PQQ or its precursor to the periplasm. The sequence is that of Coenzyme PQQ synthesis protein B from Methylorubrum populi (strain ATCC BAA-705 / NCIMB 13946 / BJ001) (Methylobacterium populi).